We begin with the raw amino-acid sequence, 436 residues long: UPF0597 protein YhaM (436 aa).

It belongs to the UPF0597 family.

This Salmonella paratyphi B (strain ATCC BAA-1250 / SPB7) protein is UPF0597 protein YhaM.